The primary structure comprises 835 residues: Disease resistance protein RPP13 (835 aa).

A coiled-coil region spans residues 25–41 (MAVKEDLEELKTELTCI). The NB-ARC domain occupies 144 to 453 (SSLRVRQLRR…AEGFIQGDEE (310 aa)). Residue 192 to 199 (GMGGLGKT) participates in ATP binding.

The protein belongs to the disease resistance NB-LRR family. RPP13 subfamily.

Disease resistance protein. Resistance proteins guard the plant against pathogens that contain an appropriate avirulence protein via an indirect interaction with this avirulence protein. That triggers a defense system including the hypersensitive response, which restricts the pathogen growth. In contrast to other resistance proteins, it works independently of ESD1 and NSD1 proteins and does not require the accumulation of salicylic acid, suggesting the existence of an independent signaling pathway. The specificity to avirulence proteins differs in the different cultivars. The chain is Disease resistance protein RPP13 (RPP13) from Arabidopsis thaliana (Mouse-ear cress).